The primary structure comprises 301 residues: MPGIKEIRTKIKSVQNTRKITKAMEMVAASKMRKAQERMRAGRPYATKVREIAAHLMQANPEYSHPYLVEREVKAVGVVLVTTDKGLCGGLNTNISRVTLSKLKEFEQRSIKVQATAFGNKGLGLLTRIGAKLVSQEVQLGDKPDLDRLLGAIKVQLDDYLEGRIDALYVATTRFVNTMKQEPVFLRLLPLSNGLDDPFQSGVETLAKTAEIKSDYSWDYIYEPDAKSVIDDLLQRYVEGLLYQAVAENMASEQSARMVAMKSASDNAKKVIGDLQLVYNKTRQAAITKEISEIVGGAAAV.

The protein belongs to the ATPase gamma chain family. As to quaternary structure, F-type ATPases have 2 components, CF(1) - the catalytic core - and CF(0) - the membrane proton channel. CF(1) has five subunits: alpha(3), beta(3), gamma(1), delta(1), epsilon(1). CF(0) has three main subunits: a, b and c.

The protein localises to the cell inner membrane. Its function is as follows. Produces ATP from ADP in the presence of a proton gradient across the membrane. The gamma chain is believed to be important in regulating ATPase activity and the flow of protons through the CF(0) complex. This chain is ATP synthase gamma chain, found in Bordetella pertussis (strain Tohama I / ATCC BAA-589 / NCTC 13251).